Consider the following 539-residue polypeptide: MVLPVADLPDDVDALKAMILAMAKERAANEARLAAAAAEVARLKAVEKSANERIANLTSILKVLQRTQHGTRSERLRLAVNDEQVSFAFEEVETGLSEIQSELNRAAGDKPKRAPRPRKGFAAHLERIEEVIEPEVPADCAGLEKVLIGEDRSERLDVVPPKFRVIVTRRPKYAFRGRDGVVQALAPAHLIESGLPTERLLAYIAVSKYADGLPLYRQEAIYLRDGVEVSRSLMAQWMGHLGFELQMLADYILERVKEGERVFADETTLPTLAPGSGKTTKAWLWAYARDDRPYGGTSPPMVAYRFEDGRGADCVARHLAGFSGILQVDGYSAYTNLAKARAKTGSNETIQLAGCWAHLRRKFYDLHISGVSQAATDSIIAMTELWRLEDEVRGKDAASRAELRQEKSSAIVASLFELWEKELGKVSGKSKTAEAIRYALTRREALERFLTDGRIEIDSNIVERAIRPQTITRKNSLFAGSEGGGRTWATVATLLQTCKMNGVDPLDWLSQTLTRIAQGWPASEIEALMPWNFKPDAIG.

Belongs to the transposase 25 family.

This is an uncharacterized protein from Sinorhizobium fredii (strain NBRC 101917 / NGR234).